Here is a 510-residue protein sequence, read N- to C-terminus: Xylose import ATP-binding protein XylG (510 aa).

ABC transporter domains follow at residues leucine 5 to glutamate 242 and leucine 259 to glutamate 505. An ATP-binding site is contributed by glycine 37 to serine 44.

The protein belongs to the ABC transporter superfamily. Xylose importer (TC 3.A.1.2.4) family. As to quaternary structure, the complex is composed of two ATP-binding proteins (XylG), two transmembrane proteins (XylH) and a solute-binding protein (XylF).

Its subcellular location is the cell inner membrane. The catalysed reaction is D-xylose(out) + ATP + H2O = D-xylose(in) + ADP + phosphate + H(+). Its function is as follows. Part of the ABC transporter complex XylFGH involved in xylose import. Responsible for energy coupling to the transport system. The polypeptide is Xylose import ATP-binding protein XylG (Yersinia pestis).